The primary structure comprises 523 residues: Calcium-dependent protein kinase 1 (523 aa).

A disordered region spans residues Met-1 to Glu-36. The N-myristoyl glycine moiety is linked to residue Gly-2. Cys-3 carries S-palmitoyl cysteine lipidation. Positions Tyr-57–Ile-324 constitute a Protein kinase domain. Residues Leu-63–Val-71, Lys-86, and Lys-90 each bind ATP. Ser-65 carries the post-translational modification Phosphoserine. Ser-117 is subject to Phosphoserine. The active-site Proton acceptor is Asp-190. Phosphoserine occurs at positions 216 and 219. Phosphothreonine is present on Thr-230. The residue at position 334 (Ser-334) is a Phosphoserine. The J domain autoinhibitory motif motif lies at Asn-345 to Ser-352. A j domain region spans residues Asn-345–Ile-363. The short motif at Gln-353 to Ile-363 is the J domain interacts with the EF-hand domains element. EF-hand domains lie at Glu-371 to Phe-406, Asn-415 to Leu-450, Phe-451 to Ser-486, and Glu-487 to His-520. Residues Asp-384, Asn-386, Asp-388, Gln-390, Glu-395, Asp-428, Asp-430, Asn-432, Tyr-434, Glu-439, Asp-464, Asp-466, Ser-468, Lys-470, Glu-475, Asp-498, Asn-500, Asp-502, Met-504, and Glu-509 each coordinate Ca(2+).

This sequence belongs to the protein kinase superfamily. Ser/Thr protein kinase family. CDPK subfamily. In terms of assembly, monomer. Mg(2+) serves as cofactor. Myristoylated. Myristoylation and palmitoylation are required for the localization to the parasitophorous vacuole membrane. Post-translationally, palmitoylated. Palmitoylation increases in merozoites in response to low level of extracellular K(+) in the host blood. Myristoylation and palmitoylation are required for the localization to the parasitophorous vacuole membrane. In terms of processing, phosphorylation at Thr-230 may regulate CDPK1 kinase activity. Phosphorylation increases in response to an increase in intracellular Ca(2+) levels. Autophosphorylated in vitro. Autophosphorylation does not affect membrane localization in vitro.

Its subcellular location is the membrane. The protein resides in the cell membrane. It localises to the parasitophorous vacuole membrane. The protein localises to the cytoplasm. It is found in the cell projection. Its subcellular location is the cilium. The protein resides in the flagellum. It localises to the host cell membrane. It carries out the reaction L-seryl-[protein] + ATP = O-phospho-L-seryl-[protein] + ADP + H(+). The catalysed reaction is L-threonyl-[protein] + ATP = O-phospho-L-threonyl-[protein] + ADP + H(+). With respect to regulation, activated by calcium. Upon calcium binding to the EF-hand domains, the C-terminus of the junction domain (J domain) undergoes a conformational change which results in the dissociation of the pseudo-substrate inhibitory motif from the catalytic domain. This, in turn may facilitate the autophosphorylation of the activation loop at Thr-230, which leads to the kinase activation. Functionally, calcium-dependent protein kinase which acts as a sensor and effector of intracellular Ca(2+) levels probably in part downstream of cGMP-activated PKG kinase. During the liver stage, involved in sporozoite motility and thus in sporozoite invasion of host hepatocytes, probably together with CDPK4 and CDPK5. In the mosquito midgut and during the last stage of male gamete exflagellation, may play a role in the rupture of the host erythrocyte membrane. In the mosquito midgut, required for the differentiation of the zygote into the ookinete by promoting the translational activation of a subset of repressed mRNAs; these mRNAs are kept repressed in the zygote by the DOZI- or CITH-containing mRNP complexes. Dispensable during the asexual blood stage. The sequence is that of Calcium-dependent protein kinase 1 from Plasmodium berghei (strain Anka).